Reading from the N-terminus, the 373-residue chain is Ferroptosis suppressor protein 1 (373 aa).

G2 carries N-myristoyl glycine lipidation. The chain crosses the membrane as a helical span at residues 7–27 (VDTGAVHVVIVGGGFGGIAAA). 6-hydroxy-FAD-binding positions include 18-22 (GGGFG), R54, and V82. An N6-acetyllysine modification is found at K168. D285 contributes to the 6-hydroxy-FAD binding site.

Belongs to the FAD-dependent oxidoreductase family. In terms of assembly, interacts with importin subunits KPNA2 and IPO5; this interaction likely mediates the translocation into the nucleus upon oxidative stress. Requires 6-hydroxy-FAD as cofactor. In terms of processing, N-myristoylation at Gly-2 mediates the recruitment to lipid droplets and plasma membrane. Acetylation at Lys-168 prevents AIFM2 ubiquitination and degradation, thereby inhibiting ferroptosis. KAT2B mediates acetylation at Lys-168, while HDAC3 removes it. Post-translationally, ubiquitinated. AIFM2 undergoes 'Lys-29'-ubiquitination and proteasomal degradation, which is inhibited by acetylation at Lys-168. Detected in most normal tissues as two transcripts of 1.8 and 4.0 kb in length, respectively. Highly expressed in liver, testis, and kidney, and expressed at lower levels in pancreas, spleen, brain and lung. Expressed in heart (at protein level).

The protein resides in the lipid droplet. The protein localises to the cell membrane. Its subcellular location is the cytoplasm. It is found in the mitochondrion membrane. It localises to the nucleus. It carries out the reaction ubiquinone-10 + NADH + H(+) = ubiquinol-10 + NAD(+). It catalyses the reaction phylloquinone + NADH + H(+) = phylloquinol + NAD(+). The catalysed reaction is menaquinone-4 + NADH + H(+) = menaquinol-4 + NAD(+). The enzyme catalyses menadione + NADH + H(+) = menadiol + NAD(+). The modification by 4-hydroxy-2-nonenal (HNE) adduction in mitochondria results in loss of the oxidoreductase activity and activation of a novel function in mitochondrial oxidative stress signaling. An NAD(P)H-dependent oxidoreductase that acts as a key inhibitor of ferroptosis. At the plasma membrane, catalyzes reduction of coenzyme Q/ubiquinone-10 to ubiquinol-10, a lipophilic radical-trapping antioxidant that prevents lipid oxidative damage and consequently ferroptosis. Acts in parallel to GPX4 to suppress phospholipid peroxidation and ferroptosis. This anti-ferroptotic function is independent of cellular glutathione levels. Also acts as a potent radical-trapping antioxidant by mediating warfarin-resistant vitamin K reduction in the canonical vitamin K cycle: catalyzes NAD(P)H-dependent reduction of vitamin K (phylloquinone, menaquinone-4 and menadione) to hydroquinone forms. Hydroquinones act as potent radical-trapping antioxidants inhibitor of phospholipid peroxidation and ferroptosis. May play a role in mitochondrial stress signaling. Upon oxidative stress, associates with the lipid peroxidation end product 4-hydroxy-2-nonenal (HNE) forming a lipid adduct devoid of oxidoreductase activity, which then translocates from mitochondria into the nucleus triggering DNA damage and cell death. This chain is Ferroptosis suppressor protein 1, found in Mus musculus (Mouse).